A 217-amino-acid polypeptide reads, in one-letter code: Probable transaldolase (217 aa).

Lys-83 acts as the Schiff-base intermediate with substrate in catalysis.

The protein belongs to the transaldolase family. Type 3B subfamily.

It localises to the cytoplasm. It catalyses the reaction D-sedoheptulose 7-phosphate + D-glyceraldehyde 3-phosphate = D-erythrose 4-phosphate + beta-D-fructose 6-phosphate. It participates in carbohydrate degradation; pentose phosphate pathway; D-glyceraldehyde 3-phosphate and beta-D-fructose 6-phosphate from D-ribose 5-phosphate and D-xylulose 5-phosphate (non-oxidative stage): step 2/3. Transaldolase is important for the balance of metabolites in the pentose-phosphate pathway. The protein is Probable transaldolase of Brucella melitensis biotype 1 (strain ATCC 23456 / CCUG 17765 / NCTC 10094 / 16M).